Consider the following 122-residue polypeptide: Small ribosomal subunit protein uS13 (122 aa).

The segment at 97 to 122 is disordered; that stretch reads PVRGQRTHTNARTRKGPAKAIAGKKK.

Belongs to the universal ribosomal protein uS13 family. Part of the 30S ribosomal subunit. Forms a loose heterodimer with protein S19. Forms two bridges to the 50S subunit in the 70S ribosome.

Located at the top of the head of the 30S subunit, it contacts several helices of the 16S rRNA. In the 70S ribosome it contacts the 23S rRNA (bridge B1a) and protein L5 of the 50S subunit (bridge B1b), connecting the 2 subunits; these bridges are implicated in subunit movement. Contacts the tRNAs in the A and P-sites. In Bartonella tribocorum (strain CIP 105476 / IBS 506), this protein is Small ribosomal subunit protein uS13.